An 89-amino-acid chain; its full sequence is Small ribosomal subunit protein uS15 (89 aa).

The protein belongs to the universal ribosomal protein uS15 family. As to quaternary structure, part of the 30S ribosomal subunit. Forms a bridge to the 50S subunit in the 70S ribosome, contacting the 23S rRNA.

Functionally, one of the primary rRNA binding proteins, it binds directly to 16S rRNA where it helps nucleate assembly of the platform of the 30S subunit by binding and bridging several RNA helices of the 16S rRNA. In terms of biological role, forms an intersubunit bridge (bridge B4) with the 23S rRNA of the 50S subunit in the ribosome. The sequence is that of Small ribosomal subunit protein uS15 from Nitratidesulfovibrio vulgaris (strain DSM 19637 / Miyazaki F) (Desulfovibrio vulgaris).